A 183-amino-acid chain; its full sequence is Dual-action ribosomal maturation protein DarP (183 aa).

The segment at 1–27 is disordered; sequence MSSHSQEPVGEENFDDSEYDRPNKSQV. A compositionally biased stretch (acidic residues) spans 9 to 18; the sequence is VGEENFDDSE.

It belongs to the DarP family.

The protein localises to the cytoplasm. Its function is as follows. Member of a network of 50S ribosomal subunit biogenesis factors which assembles along the 30S-50S interface, preventing incorrect 23S rRNA structures from forming. Promotes peptidyl transferase center (PTC) maturation. The protein is Dual-action ribosomal maturation protein DarP of Bordetella pertussis (strain Tohama I / ATCC BAA-589 / NCTC 13251).